The primary structure comprises 311 residues: R2-like ligand binding oxidase (311 aa).

Mn(2+)-binding residues include Glu68, Glu101, and His104. A cross-link (3-(O4'-tyrosyl)-valine (Val-Tyr)) is located at residues Val71 to Tyr162. Fe cation is bound at residue Glu101. Glu167, Glu202, and His205 together coordinate Fe cation.

This sequence belongs to the ribonucleoside diphosphate reductase small chain family. R2-like ligand binding oxidase subfamily. Homodimer. The cofactor is Fe cation. Mn(2+) is required as a cofactor.

In terms of biological role, probable oxidase that might be involved in lipid metabolism. The sequence is that of R2-like ligand binding oxidase from Mycobacterium avium (strain 104).